We begin with the raw amino-acid sequence, 66 residues long: Large ribosomal subunit protein bL35 (66 aa).

Basic residues predominate over residues 1 to 26 (MPKMKTHRGAAKRVKRTASGKLKRSR). The interval 1 to 49 (MPKMKTHRGAAKRVKRTASGKLKRSRAFTSHLFANKSTKQKRKLRKASL) is disordered.

This sequence belongs to the bacterial ribosomal protein bL35 family.

The protein is Large ribosomal subunit protein bL35 of Staphylococcus carnosus (strain TM300).